A 48-amino-acid chain; its full sequence is Large ribosomal subunit protein bL32 (48 aa).

Positions 1–20 (MAVPKRRVSKTRAAKRRTHY) are enriched in basic residues. The segment at 1 to 48 (MAVPKRRVSKTRAAKRRTHYKVSLPIPVKDKDGSWKLPHRINTKTGEY) is disordered.

The protein belongs to the bacterial ribosomal protein bL32 family.

In Campylobacter hominis (strain ATCC BAA-381 / DSM 21671 / CCUG 45161 / LMG 19568 / NCTC 13146 / CH001A), this protein is Large ribosomal subunit protein bL32.